The chain runs to 1160 residues: Nonribosomal peptide synthetase fmqC (1160 aa).

The tract at residues 132–520 is adenylation; it reads TYRELNDRSS…LGEVEHALQQ (389 aa). Positions 642-719 constitute a Carrier domain; sequence QPVTQLEESL…EMAGMLDGVT (78 aa). S679 carries the post-translational modification O-(pantetheine 4'-phosphoryl)serine. Residues 749–1025 are condensation; it reads CTLEDLQEGF…CAAAETPMRI (277 aa).

This sequence belongs to the NRP synthetase family. In terms of assembly, interacts with the mitogen-activated protein kinase mpkA. Phosphorylated by mpkA during conidiogenesis.

It localises to the cytoplasm. The protein operates within alkaloid biosynthesis. Nonribosomal peptide synthetase; part of the gene cluster that mediates the biosynthesis of the antitumor fumiquinazolines that confer a dual-usage capability to defend against phagocytes in the environment and animal hosts. The simplest member is fumiquinazoline F (FQF) with a 6-6-6 tricyclic core derived from anthranilic acid (Ant), tryptophan (Trp), and alanine (Ala). The trimodular NRPS fmqA is responsible for FQF formation. Modules 1, 2 and 3 of fmqA are predicted to activate and load Ant, Trp and Ala, respectively, providing for the assembly of an Ant-Trp-Ala-S-enzyme intermediate that would undergo double cyclization for chain release and generation of the tricyclic 6-6-6 product fumiquinazoline F. The presence of an E domain predicted for module 2 of fmqA is consistent with epimerization of L-Trp to D-Trp during assembly to generate the R-stereocenter at C14 of FQF. The FAD-dependent monooxygenase fmqB and the monomodular NRPS fmqC then maturate FQF to FQA. FmqB oxidizes the 2',3'-double bond of the indole side chain of FQF, and fmqC activates L-Ala as the adenylate, installs it as the pantetheinyl thioester on its carrier protein domain, and acylates the oxidized indole for subsequent intramolecular cyclization to create the 6-5-5-imidazolindolone of FQA. The FAD-linked oxidoreductase fmqD introduces a third layer of scaffold complexity by converting FQA to the spirohemiaminal FQC, presumably by catalyzing the formation of a transient imine within the pyrazinone ring. FQC subsequently converts nonenzymatically to the known cyclic aminal FQD. The protein is Nonribosomal peptide synthetase fmqC of Aspergillus fumigatus (strain ATCC MYA-4609 / CBS 101355 / FGSC A1100 / Af293) (Neosartorya fumigata).